We begin with the raw amino-acid sequence, 316 residues long: RNA interference defective protein 11 (316 aa).

The RING-type; degenerate zinc finger occupies 183–218; sequence CYINFNCQTSKVMFGCGHVYCEQCLNSWNDKPCSVC.

As to quaternary structure, interacts (via RING-type zinc finger domain) with rde-10.

Functionally, in complex with rde-10, required in the endogenous and exogenous siRNA pathway for biogenesis and accumulation of secondary small interfering RNA (siRNA) intermediates, such as 22G-siRNAs derived from ergo-1 targets. In Caenorhabditis elegans, this protein is RNA interference defective protein 11.